The chain runs to 100 residues: MDFSQLGGLLDGMKKEFSQLEEKNKDTIHTSKSGGGMVSVSFNGVGELVDLQIDDSLLEDKEAMQIYLMSALNDGYKAVEENRKNLAFNMLGNLGNFAKL.

Belongs to the YbaB/EbfC family. Homodimer.

It localises to the cytoplasm. It is found in the nucleoid. Functionally, binds to DNA and alters its conformation. May be involved in regulation of gene expression, nucleoid organization and DNA protection. The protein is Nucleoid-associated protein HPSH_00175 of Helicobacter pylori (strain Shi470).